The primary structure comprises 435 residues: Methylenetetrahydrofolate--tRNA-(uracil-5-)-methyltransferase TrmFO (435 aa).

Residue 9–14 (GAGLAG) participates in FAD binding.

The protein belongs to the MnmG family. TrmFO subfamily. It depends on FAD as a cofactor.

The protein resides in the cytoplasm. It carries out the reaction uridine(54) in tRNA + (6R)-5,10-methylene-5,6,7,8-tetrahydrofolate + NADH + H(+) = 5-methyluridine(54) in tRNA + (6S)-5,6,7,8-tetrahydrofolate + NAD(+). The catalysed reaction is uridine(54) in tRNA + (6R)-5,10-methylene-5,6,7,8-tetrahydrofolate + NADPH + H(+) = 5-methyluridine(54) in tRNA + (6S)-5,6,7,8-tetrahydrofolate + NADP(+). Its function is as follows. Catalyzes the folate-dependent formation of 5-methyl-uridine at position 54 (M-5-U54) in all tRNAs. This chain is Methylenetetrahydrofolate--tRNA-(uracil-5-)-methyltransferase TrmFO, found in Staphylococcus haemolyticus (strain JCSC1435).